Reading from the N-terminus, the 225-residue chain is Protein-L-isoaspartate O-methyltransferase (225 aa).

The active site involves Ser75.

It belongs to the methyltransferase superfamily. L-isoaspartyl/D-aspartyl protein methyltransferase family.

It is found in the cytoplasm. It catalyses the reaction [protein]-L-isoaspartate + S-adenosyl-L-methionine = [protein]-L-isoaspartate alpha-methyl ester + S-adenosyl-L-homocysteine. Catalyzes the methyl esterification of L-isoaspartyl residues in peptides and proteins that result from spontaneous decomposition of normal L-aspartyl and L-asparaginyl residues. It plays a role in the repair and/or degradation of damaged proteins. This is Protein-L-isoaspartate O-methyltransferase from Xanthomonas axonopodis pv. citri (strain 306).